A 304-amino-acid chain; its full sequence is MPEQALLEEVVDKVRPLLGQGKVANYIPALANVDAGKLGIAVTTIDGETIGAGDYLEPFSIQSISKVFSLTLALTLYEETEIWSRVGKEPSGHSFNSLVQVELERGKPRNPFINAGALVIADLLQSRLGAPKHRMLELVRALSQNDKVCFDKQVADSEYQHSARNAAIAYLMKSFGNFQGDVDTVLRTYFHYCALKMNCADLSRAMLYLANRGKTLDGTELISQVQTRQLNALLATSGLYDGAGEFAYRVGMPGKSGVGGGIIAVIPGELSVCVWSPELDNQGNSLAGTAMLEHLSQRLGRSIF.

Substrate contacts are provided by Ser-63, Asn-114, Glu-158, Asn-165, Tyr-189, Tyr-240, and Val-258.

Belongs to the glutaminase family. Homotetramer.

It catalyses the reaction L-glutamine + H2O = L-glutamate + NH4(+). This is Glutaminase from Shewanella sp. (strain ANA-3).